We begin with the raw amino-acid sequence, 163 residues long: Allophycocyanin alpha-B chain (163 aa).

An N4-methylasparagine modification is found at N71. Position 81 (C81) interacts with (2R,3E)-phycocyanobilin.

This sequence belongs to the phycobiliprotein family. Heterodimer of an alpha and a beta chain. In terms of processing, contains one covalently linked bilin chromophore.

The protein localises to the cellular thylakoid membrane. Its function is as follows. Light-harvesting photosynthetic bile pigment-protein from the phycobiliprotein complex. Allophycocyanin has a maximum absorption at approximately 650 nanometers. The sequence is that of Allophycocyanin alpha-B chain from Synechococcus sp. (strain ATCC 27144 / PCC 6301 / SAUG 1402/1) (Anacystis nidulans).